A 729-amino-acid chain; its full sequence is Fatty acid oxidation complex subunit alpha (729 aa).

The enoyl-CoA hydratase/isomerase stretch occupies residues 1–189 (MLYKGDTLYL…KIGLVDGVVK (189 aa)). Residue D296 participates in substrate binding. Residues 311-729 (ETPKQAAVLG…ARPVGSLKTA (419 aa)) form a 3-hydroxyacyl-CoA dehydrogenase region. NAD(+) contacts are provided by residues M324, D343, 400 to 402 (VVE), K407, and S429. Residue H450 is the For 3-hydroxyacyl-CoA dehydrogenase activity of the active site. Residue N453 coordinates NAD(+). Residues N500 and Y660 each contribute to the substrate site. The interval 708 to 729 (RHNEPYYPPVEPARPVGSLKTA) is disordered.

In the N-terminal section; belongs to the enoyl-CoA hydratase/isomerase family. The protein in the C-terminal section; belongs to the 3-hydroxyacyl-CoA dehydrogenase family. Heterotetramer of two alpha chains (FadB) and two beta chains (FadA).

The catalysed reaction is a (3S)-3-hydroxyacyl-CoA + NAD(+) = a 3-oxoacyl-CoA + NADH + H(+). It catalyses the reaction a (3S)-3-hydroxyacyl-CoA = a (2E)-enoyl-CoA + H2O. It carries out the reaction a 4-saturated-(3S)-3-hydroxyacyl-CoA = a (3E)-enoyl-CoA + H2O. The enzyme catalyses (3S)-3-hydroxybutanoyl-CoA = (3R)-3-hydroxybutanoyl-CoA. The catalysed reaction is a (3Z)-enoyl-CoA = a 4-saturated (2E)-enoyl-CoA. It catalyses the reaction a (3E)-enoyl-CoA = a 4-saturated (2E)-enoyl-CoA. The protein operates within lipid metabolism; fatty acid beta-oxidation. Its function is as follows. Involved in the aerobic and anaerobic degradation of long-chain fatty acids via beta-oxidation cycle. Catalyzes the formation of 3-oxoacyl-CoA from enoyl-CoA via L-3-hydroxyacyl-CoA. It can also use D-3-hydroxyacyl-CoA and cis-3-enoyl-CoA as substrate. In Salmonella newport (strain SL254), this protein is Fatty acid oxidation complex subunit alpha.